A 607-amino-acid polypeptide reads, in one-letter code: Dolichyl-diphosphooligosaccharide--protein glycosyltransferase subunit 1 (607 aa).

Residues 1 to 23 (MEAPAARLFLLLLLGTWAPAPGS) form the signal peptide. Residues 24–434 (ASSEAPPLIN…VVHYTFNKVL (411 aa)) lie on the Lumenal side of the membrane. Position 187 is an N6-acetyllysine (lysine 187). Asparagine 299 carries N-linked (GlcNAc...) asparagine glycosylation. A helical transmembrane segment spans residues 435-455 (MLQEPLLVVAAFYILFFTVII). Topologically, residues 456–607 (YVRLDFSITK…TKIDHILDAL (152 aa)) are cytoplasmic. Lysine 538 carries the N6-acetyllysine; alternate modification. Residue lysine 538 forms a Glycyl lysine isopeptide (Lys-Gly) (interchain with G-Cter in SUMO2); alternate linkage.

Belongs to the OST1 family. As to quaternary structure, component of the oligosaccharyltransferase (OST) complex. OST exists in two different complex forms which contain common core subunits RPN1, RPN2, OST48, OST4, DAD1 and TMEM258, either STT3A or STT3B as catalytic subunits, and form-specific accessory subunits. STT3A complex assembly occurs through the formation of 3 subcomplexes. Subcomplex 1 contains RPN1 and TMEM258, subcomplex 2 contains the STT3A-specific subunits STT3A, DC2/OSTC, and KCP2 as well as the core subunit OST4, and subcomplex 3 contains RPN2, DAD1, and OST48. The STT3A complex can form stable complexes with the Sec61 complex or with both the Sec61 and TRAP complexes. Interacts with TMEM35A/NACHO. Ubiquitinated by the ECS(ASB11) complex. Post-translationally, ufmylated by UFL1 in response to endoplasmic reticulum stress, promoting reticulophagy of endoplasmic reticulum sheets.

It localises to the endoplasmic reticulum membrane. It participates in protein modification; protein glycosylation. Its function is as follows. Subunit of the oligosaccharyl transferase (OST) complex that catalyzes the initial transfer of a defined glycan (Glc(3)Man(9)GlcNAc(2) in eukaryotes) from the lipid carrier dolichol-pyrophosphate to an asparagine residue within an Asn-X-Ser/Thr consensus motif in nascent polypeptide chains, the first step in protein N-glycosylation. N-glycosylation occurs cotranslationally and the complex associates with the Sec61 complex at the channel-forming translocon complex that mediates protein translocation across the endoplasmic reticulum (ER). All subunits are required for a maximal enzyme activity. The protein is Dolichyl-diphosphooligosaccharide--protein glycosyltransferase subunit 1 of Pongo abelii (Sumatran orangutan).